Here is a 309-residue protein sequence, read N- to C-terminus: Pyridoxal kinase (309 aa).

Residue Thr-2 is modified to N-acetylthreonine; in Pyridoxal kinase, N-terminally processed. Positions 23 and 58 each coordinate pyridoxal. Thr-58 serves as a coordination point for pyridoxal 5'-phosphate. Asp-124 is a binding site for ATP. Residue Asp-124 coordinates Na(+). Asp-129 contacts Mg(2+). Thr-155 serves as a coordination point for Na(+). Residues 157 to 160, 193 to 194, 225 to 227, and Thr-232 each bind ATP; these read NQFE, TS, and IPA. Thr-193 provides a ligand contact to Na(+). A pyridoxal 5'-phosphate-binding site is contributed by 233 to 234; the sequence is GD. Residue Asp-234 is the Proton acceptor of the active site.

This sequence belongs to the pyridoxine kinase family. As to quaternary structure, homodimer. Zn(2+) is required as a cofactor. Expressed ubiquitously in leaves, stems, roots, flowers and siliques. Present in root hairs and other tip-growing cells such as papillar cells on the top of stigma.

It carries out the reaction pyridoxal + ATP = pyridoxal 5'-phosphate + ADP + H(+). Its pathway is cofactor metabolism; pyridoxal 5'-phosphate salvage; pyridoxal 5'-phosphate from pyridoxal: step 1/1. Functionally, catalyzes the transfer of a phosphate group from ATP to the 5-hydroxylmethyl group of pyridoxal to form the biologically active pyridoxal phosphate, an active form of vitamin B6. Required for Na(+) and K(+) homeostasis and for salt tolerance. Involved in root hair development, both for initiation and tip growth. The chain is Pyridoxal kinase from Arabidopsis thaliana (Mouse-ear cress).